Consider the following 167-residue polypeptide: UPF0225 protein VP1145 (167 aa).

This sequence belongs to the UPF0225 family.

This chain is UPF0225 protein VP1145, found in Vibrio parahaemolyticus serotype O3:K6 (strain RIMD 2210633).